Here is a 645-residue protein sequence, read N- to C-terminus: Phosphomethylpyrimidine synthase (645 aa).

Residues 1 to 12 (MSHNTVIPTTDI) are compositionally biased toward polar residues. Residues 1-25 (MSHNTVIPTTDISPKPDPARPRKAQ) are disordered. Substrate-binding positions include Asn-253, Met-282, Tyr-311, His-347, 367-369 (SRG), 408-411 (DGLR), and Glu-447. Residue His-451 participates in Zn(2+) binding. Tyr-474 lines the substrate pocket. His-515 provides a ligand contact to Zn(2+). [4Fe-4S] cluster contacts are provided by Cys-595, Cys-598, and Cys-603.

This sequence belongs to the ThiC family. In terms of assembly, homodimer. [4Fe-4S] cluster is required as a cofactor.

The enzyme catalyses 5-amino-1-(5-phospho-beta-D-ribosyl)imidazole + S-adenosyl-L-methionine = 4-amino-2-methyl-5-(phosphooxymethyl)pyrimidine + CO + 5'-deoxyadenosine + formate + L-methionine + 3 H(+). It participates in cofactor biosynthesis; thiamine diphosphate biosynthesis. Catalyzes the synthesis of the hydroxymethylpyrimidine phosphate (HMP-P) moiety of thiamine from aminoimidazole ribotide (AIR) in a radical S-adenosyl-L-methionine (SAM)-dependent reaction. This chain is Phosphomethylpyrimidine synthase, found in Photorhabdus laumondii subsp. laumondii (strain DSM 15139 / CIP 105565 / TT01) (Photorhabdus luminescens subsp. laumondii).